We begin with the raw amino-acid sequence, 235 residues long: Serine protease SplA (235 aa).

Positions 1–35 are cleaved as a signal peptide; it reads MNKNVMIKGLTALTILTSLGFAENISDQPHSIAKA. Residues His-74, Asp-113, and Ser-189 each act as charge relay system in the active site.

It belongs to the peptidase S1B family.

It localises to the secreted. This Staphylococcus aureus protein is Serine protease SplA (splA).